We begin with the raw amino-acid sequence, 252 residues long: Large ribosomal subunit protein uL3 (252 aa).

The residue at position 169 (Gln169) is an N5-methylglutamine.

Belongs to the universal ribosomal protein uL3 family. Part of the 50S ribosomal subunit. Forms a cluster with proteins L14 and L19. Post-translationally, methylated by PrmB.

Its function is as follows. One of the primary rRNA binding proteins, it binds directly near the 3'-end of the 23S rRNA, where it nucleates assembly of the 50S subunit. The chain is Large ribosomal subunit protein uL3 from Hyphomonas neptunium (strain ATCC 15444).